A 284-amino-acid polypeptide reads, in one-letter code: 2-dehydro-3-deoxyphosphooctonate aldolase (284 aa).

This sequence belongs to the KdsA family.

It localises to the cytoplasm. The enzyme catalyses D-arabinose 5-phosphate + phosphoenolpyruvate + H2O = 3-deoxy-alpha-D-manno-2-octulosonate-8-phosphate + phosphate. The protein operates within carbohydrate biosynthesis; 3-deoxy-D-manno-octulosonate biosynthesis; 3-deoxy-D-manno-octulosonate from D-ribulose 5-phosphate: step 2/3. It participates in bacterial outer membrane biogenesis; lipopolysaccharide biosynthesis. This chain is 2-dehydro-3-deoxyphosphooctonate aldolase, found in Burkholderia cenocepacia (strain HI2424).